Consider the following 119-residue polypeptide: Large ribosomal subunit protein uL18 (119 aa).

It belongs to the universal ribosomal protein uL18 family. In terms of assembly, part of the 50S ribosomal subunit; part of the 5S rRNA/L5/L18/L25 subcomplex. Contacts the 5S and 23S rRNAs.

Functionally, this is one of the proteins that bind and probably mediate the attachment of the 5S RNA into the large ribosomal subunit, where it forms part of the central protuberance. This Chlorobium phaeovibrioides (strain DSM 265 / 1930) (Prosthecochloris vibrioformis (strain DSM 265)) protein is Large ribosomal subunit protein uL18.